A 279-amino-acid polypeptide reads, in one-letter code: VDEEDDIVYFQAGTLDAGEATAQKAEGKKKEGEVSSGKAVVVKDKDVDLGTAGTHSVPRLKSMTSKLTLPMLKGKSRCNLDHLLSYKQTVDLSNARATHEQFQNWYDGVMASYELEESSMEIILNGFMVWCIENGTSPDINGVWTMMDDEEQISYPLKPMLDHAKPSLRQIMRHFSALAEAYIEMRSREKPYMPRYGLQRNLRDQSLARYAFDFYEITATTPVRAKEAHLQMKAAALKNSNTNMFGLDGNVTTSEEDTERHTATDVNRNMHHLLGVKGV.

The protein belongs to the potyviridae genome polyprotein family. In terms of processing, genome polyprotein of potyviruses undergoes post-translational proteolytic processing by the main proteinase NIa-pro resulting in the production of at least ten individual proteins. The P1 proteinase and the HC-pro cleave only their respective C-termini autocatalytically. 6K1 is essential for proper proteolytic separation of P3 from CI.

It is found in the virion. The catalysed reaction is RNA(n) + a ribonucleoside 5'-triphosphate = RNA(n+1) + diphosphate. In terms of biological role, an RNA-dependent RNA polymerase that plays an essential role in the virus replication. Functionally, involved in aphid transmission, cell-to-cell and systemis movement, encapsidation of the viral RNA and in the regulation of viral RNA amplification. The sequence is that of Genome polyprotein from Solanum betaceum (Tamarillo).